Here is a 243-residue protein sequence, read N- to C-terminus: MSEMIYGIHAVQALLERAPERFQEVFILKGREDKRLLPLIHALESQGVVIQLANRQYLDEKSDGAVHQGIIARVKPGRQYQENDLPDLIALHDRPFLLILDGVTDPHNLGACLRSADAAGVHAVIVPKDRSAQLNATAKKVACGAAESVPLIRVTNLARTMRMLQEENIWIVGTAGEADHTLYQSKMPGRMALVMGAEGEGMRRLTREHCDELISIPMAGSVSSLNVSVATGICLFEAVRQRT.

Positions 196, 216, and 225 each coordinate S-adenosyl-L-methionine.

Belongs to the class IV-like SAM-binding methyltransferase superfamily. RNA methyltransferase TrmH family. RlmB subfamily. As to quaternary structure, homodimer.

It is found in the cytoplasm. The catalysed reaction is guanosine(2251) in 23S rRNA + S-adenosyl-L-methionine = 2'-O-methylguanosine(2251) in 23S rRNA + S-adenosyl-L-homocysteine + H(+). Its function is as follows. Specifically methylates the ribose of guanosine 2251 in 23S rRNA. In Salmonella typhimurium (strain LT2 / SGSC1412 / ATCC 700720), this protein is 23S rRNA (guanosine-2'-O-)-methyltransferase RlmB.